We begin with the raw amino-acid sequence, 621 residues long: Chaperone protein HscA homolog (621 aa).

The protein belongs to the heat shock protein 70 family.

In terms of biological role, chaperone involved in the maturation of iron-sulfur cluster-containing proteins. Has a low intrinsic ATPase activity which is markedly stimulated by HscB. This Cupriavidus pinatubonensis (strain JMP 134 / LMG 1197) (Cupriavidus necator (strain JMP 134)) protein is Chaperone protein HscA homolog.